The primary structure comprises 352 residues: Palmitoyltransferase PFA5 (352 aa).

Transmembrane regions (helical) follow at residues 12–32 and 53–73; these read YWTI…GTWA and IGLI…WVLI. Positions 114 to 164 constitute a DHHC domain; the sequence is VWCSNCQSLKVGRTKHSSHQGHCVPRFDHYCVWLGAVIGFKNYRLFVQFVF. C144 functions as the S-palmitoyl cysteine intermediate in the catalytic mechanism. 2 consecutive transmembrane segments (helical) span residues 159 to 179 and 195 to 215; these read FVQF…TISV and LIVL…LFVS.

The protein belongs to the DHHC palmitoyltransferase family. PFA5 subfamily.

The protein resides in the membrane. It carries out the reaction L-cysteinyl-[protein] + hexadecanoyl-CoA = S-hexadecanoyl-L-cysteinyl-[protein] + CoA. This is Palmitoyltransferase PFA5 (PFA5) from Candida glabrata (strain ATCC 2001 / BCRC 20586 / JCM 3761 / NBRC 0622 / NRRL Y-65 / CBS 138) (Yeast).